The following is a 182-amino-acid chain: ATP-dependent protease subunit HslV (182 aa).

The active site involves T7. Na(+) is bound by residues G162, C165, and T168.

This sequence belongs to the peptidase T1B family. HslV subfamily. As to quaternary structure, a double ring-shaped homohexamer of HslV is capped on each side by a ring-shaped HslU homohexamer. The assembly of the HslU/HslV complex is dependent on binding of ATP.

Its subcellular location is the cytoplasm. The catalysed reaction is ATP-dependent cleavage of peptide bonds with broad specificity.. Allosterically activated by HslU binding. Protease subunit of a proteasome-like degradation complex believed to be a general protein degrading machinery. This chain is ATP-dependent protease subunit HslV, found in Legionella pneumophila subsp. pneumophila (strain Philadelphia 1 / ATCC 33152 / DSM 7513).